Consider the following 239-residue polypeptide: tRNA (guanine-N(7)-)-methyltransferase (239 aa).

Positions 69, 94, 121, and 144 each coordinate S-adenosyl-L-methionine. Aspartate 144 is a catalytic residue. Substrate is bound at residue lysine 148. Residues 150–155 (RHNKRR) are interaction with RNA. Residues aspartate 180 and 217–220 (TKFE) each bind substrate.

It belongs to the class I-like SAM-binding methyltransferase superfamily. TrmB family. As to quaternary structure, monomer.

It catalyses the reaction guanosine(46) in tRNA + S-adenosyl-L-methionine = N(7)-methylguanosine(46) in tRNA + S-adenosyl-L-homocysteine. It participates in tRNA modification; N(7)-methylguanine-tRNA biosynthesis. Functionally, catalyzes the formation of N(7)-methylguanine at position 46 (m7G46) in tRNA. The protein is tRNA (guanine-N(7)-)-methyltransferase of Yersinia pestis (strain Pestoides F).